The chain runs to 298 residues: Aclacinomycin methylesterase RdmC (298 aa).

In terms of domain architecture, AB hydrolase-1 spans 24 to 277; sequence PALLLVMGGN…LAEIPGMGHA (254 aa). Residues Ser-102, Asp-248, and His-276 contribute to the active site.

This sequence belongs to the AB hydrolase superfamily. Hydrolase RdmC family. In terms of assembly, monomer.

It catalyses the reaction aclacinomycin T + H2O = 15-demethylaclacinomycin T + methanol. Its pathway is antibiotic biosynthesis; aclacinomycin biosynthesis. In terms of biological role, involved in the biosynthesis of the anthracycline aclacinomycin which is an aromatic polyketide antibiotic that exhibits high cytotoxicity and is widely applied in the chemotherapy of a variety of cancers. Catalyzes the removal of the methoxy group from the C-15 position of aclacinomycin T and A to yield 15-demethoxyaclacinomycin T and A, respectively. The protein is Aclacinomycin methylesterase RdmC (rdmC) of Streptomyces purpurascens.